The sequence spans 480 residues: Protein nucleotidyltransferase YdiU (480 aa).

Positions 86, 88, 89, 109, 121, 122, 172, and 179 each coordinate ATP. The Proton acceptor role is filled by D248. The Mg(2+) site is built by N249 and D258. D258 contacts ATP.

The protein belongs to the SELO family. The cofactor is Mg(2+). Requires Mn(2+) as cofactor.

The enzyme catalyses L-seryl-[protein] + ATP = 3-O-(5'-adenylyl)-L-seryl-[protein] + diphosphate. It carries out the reaction L-threonyl-[protein] + ATP = 3-O-(5'-adenylyl)-L-threonyl-[protein] + diphosphate. It catalyses the reaction L-tyrosyl-[protein] + ATP = O-(5'-adenylyl)-L-tyrosyl-[protein] + diphosphate. The catalysed reaction is L-histidyl-[protein] + UTP = N(tele)-(5'-uridylyl)-L-histidyl-[protein] + diphosphate. The enzyme catalyses L-seryl-[protein] + UTP = O-(5'-uridylyl)-L-seryl-[protein] + diphosphate. It carries out the reaction L-tyrosyl-[protein] + UTP = O-(5'-uridylyl)-L-tyrosyl-[protein] + diphosphate. Functionally, nucleotidyltransferase involved in the post-translational modification of proteins. It can catalyze the addition of adenosine monophosphate (AMP) or uridine monophosphate (UMP) to a protein, resulting in modifications known as AMPylation and UMPylation. The protein is Protein nucleotidyltransferase YdiU of Klebsiella pneumoniae (strain 342).